A 123-amino-acid chain; its full sequence is Small ribosomal subunit protein uS12 (123 aa).

Aspartate 89 is subject to 3-methylthioaspartic acid.

The protein belongs to the universal ribosomal protein uS12 family. In terms of assembly, part of the 30S ribosomal subunit. Contacts proteins S8 and S17. May interact with IF1 in the 30S initiation complex.

Functionally, with S4 and S5 plays an important role in translational accuracy. In terms of biological role, interacts with and stabilizes bases of the 16S rRNA that are involved in tRNA selection in the A site and with the mRNA backbone. Located at the interface of the 30S and 50S subunits, it traverses the body of the 30S subunit contacting proteins on the other side and probably holding the rRNA structure together. The combined cluster of proteins S8, S12 and S17 appears to hold together the shoulder and platform of the 30S subunit. The polypeptide is Small ribosomal subunit protein uS12 (Gluconobacter oxydans (strain 621H) (Gluconobacter suboxydans)).